Consider the following 211-residue polypeptide: Ribosome maturation factor RimM (211 aa).

The PRC barrel domain occupies 111-182 (PDAWYDHQLV…TLVITPPLGL (72 aa)). Residues 184 to 211 (EEIPDEQPTPSATSDAEPGSAPEGDDAR) form a disordered region.

This sequence belongs to the RimM family. In terms of assembly, binds ribosomal protein uS19.

Its subcellular location is the cytoplasm. In terms of biological role, an accessory protein needed during the final step in the assembly of 30S ribosomal subunit, possibly for assembly of the head region. Essential for efficient processing of 16S rRNA. May be needed both before and after RbfA during the maturation of 16S rRNA. It has affinity for free ribosomal 30S subunits but not for 70S ribosomes. This Clavibacter sepedonicus (Clavibacter michiganensis subsp. sepedonicus) protein is Ribosome maturation factor RimM.